Here is a 274-residue protein sequence, read N- to C-terminus: Thymidylate synthase (274 aa).

Arginine 21 is a binding site for dUMP. Residue histidine 51 coordinates (6R)-5,10-methylene-5,6,7,8-tetrahydrofolate. 123-124 is a binding site for dUMP; it reads RR. Cysteine 156 serves as the catalytic Nucleophile. Residues 176–179, asparagine 187, and 217–219 contribute to the dUMP site; these read RSAD and HIY. Position 179 (aspartate 179) interacts with (6R)-5,10-methylene-5,6,7,8-tetrahydrofolate. Serine 273 is a binding site for (6R)-5,10-methylene-5,6,7,8-tetrahydrofolate.

This sequence belongs to the thymidylate synthase family. Bacterial-type ThyA subfamily. Homodimer.

It localises to the cytoplasm. The enzyme catalyses dUMP + (6R)-5,10-methylene-5,6,7,8-tetrahydrofolate = 7,8-dihydrofolate + dTMP. Its pathway is pyrimidine metabolism; dTTP biosynthesis. Functionally, catalyzes the reductive methylation of 2'-deoxyuridine-5'-monophosphate (dUMP) to 2'-deoxythymidine-5'-monophosphate (dTMP) while utilizing 5,10-methylenetetrahydrofolate (mTHF) as the methyl donor and reductant in the reaction, yielding dihydrofolate (DHF) as a by-product. This enzymatic reaction provides an intracellular de novo source of dTMP, an essential precursor for DNA biosynthesis. The protein is Thymidylate synthase of Francisella philomiragia subsp. philomiragia (strain ATCC 25017 / CCUG 19701 / FSC 153 / O#319-036).